A 438-amino-acid chain; its full sequence is Coenzyme A disulfide reductase (438 aa).

8-33 provides a ligand contact to FAD; it reads GAVAGGATCASQIRRLDKESDIIIFE. Residues threonine 15, glutamine 19, arginine 22, serine 39, and asparagine 42 each contribute to the substrate site. Cysteine 43 functions as the Nucleophile in the catalytic mechanism. Cysteine 43 acts as the Redox-active in catalysis. Residue lysine 71 participates in substrate binding. Residue 151 to 166 coordinates NADP(+); that stretch reads VLVVGAGYVSLEVLEN. Residue 267–277 coordinates FAD; it reads TNVPNIYAIGD. Histidine 299 serves as a coordination point for substrate. Tyrosine 419 provides a ligand contact to FAD. Residue lysine 427 coordinates substrate.

It belongs to the class-III pyridine nucleotide-disulfide oxidoreductase family. As to quaternary structure, homodimer. FAD is required as a cofactor.

The catalysed reaction is NADP(+) + 2 CoA = CoA-disulfide + NADPH + H(+). In terms of biological role, catalyzes specifically the NADPH-dependent reduction of coenzyme A disulfide. The sequence is that of Coenzyme A disulfide reductase from Staphylococcus aureus (strain COL).